We begin with the raw amino-acid sequence, 589 residues long: Protein OS-9 homolog (589 aa).

Positions 1–21 (MFSILNKLGIIWLALANISNC) are cleaved as a signal peptide. N-linked (GlcNAc...) asparagine glycans are attached at residues N17, N61, and N90. Positions 130 to 288 (KDCVFAYGSN…VIGVPKLCSL (159 aa)) constitute an MRH domain. A disulfide bridge links C132 with C148. 6 residues coordinate a mannooligosaccharide derivative: W143, Q155, D241, R247, E270, and Y276. 2 cysteine pairs are disulfide-bonded: C240-C274 and C255-C286. A glycan (N-linked (GlcNAc...) asparagine) is linked at N426. The interval 497 to 520 (GKGSALDSTNNDKNNKATAENDKQ) is disordered. A compositionally biased stretch (basic and acidic residues) spans 509 to 519 (KNNKATAENDK). The Prevents secretion from ER motif lies at 586–589 (HDEL).

The protein belongs to the OS-9 family. In terms of assembly, interacts with missfolded ER lumenal proteins.

The protein resides in the endoplasmic reticulum membrane. Lectin involved in the quality control of the secretory pathway. As a member of the endoplasmic reticulum-associated degradation lumenal (ERAD-L) surveillance system, targets misfolded endoplasmic reticulum lumenal glycoproteins for degradation. This Debaryomyces hansenii (strain ATCC 36239 / CBS 767 / BCRC 21394 / JCM 1990 / NBRC 0083 / IGC 2968) (Yeast) protein is Protein OS-9 homolog (YOS9).